A 313-amino-acid chain; its full sequence is uncharacterized protein (313 aa).

Residues histidine 8, histidine 10, glutamate 126, histidine 180, histidine 207, and aspartate 262 each coordinate a divalent metal cation.

This sequence belongs to the metallo-dependent hydrolases superfamily. TatD-type hydrolase family. A divalent metal cation serves as cofactor.

Its function is as follows. Putative deoxyribonuclease. This is an uncharacterized protein from Saccharomyces cerevisiae (strain ATCC 204508 / S288c) (Baker's yeast).